Reading from the N-terminus, the 616-residue chain is Chaperone protein DnaK (616 aa).

Threonine 175 carries the phosphothreonine; by autocatalysis modification. Positions 579 to 605 (GGDPSQAGGFDPNAAGGAQQAPHDDNV) are disordered.

The protein belongs to the heat shock protein 70 family.

Its function is as follows. Acts as a chaperone. The polypeptide is Chaperone protein DnaK (Clostridium botulinum (strain Alaska E43 / Type E3)).